Here is a 594-residue protein sequence, read N- to C-terminus: UvrABC system protein C (594 aa).

In terms of domain architecture, GIY-YIG spans 14 to 91 (DSPGCYLHKD…IQENMPKYNI (78 aa)). The region spanning 196–231 (DKIIDDLRSKMLEASHNQEFERAAEYRDLISGIATM) is the UVR domain.

This sequence belongs to the UvrC family. Interacts with UvrB in an incision complex.

The protein resides in the cytoplasm. The UvrABC repair system catalyzes the recognition and processing of DNA lesions. UvrC both incises the 5' and 3' sides of the lesion. The N-terminal half is responsible for the 3' incision and the C-terminal half is responsible for the 5' incision. The chain is UvrABC system protein C from Streptococcus equi subsp. zooepidemicus (strain H70).